The sequence spans 147 residues: 3-hydroxyacyl-[acyl-carrier-protein] dehydratase FabZ (147 aa).

The active site involves H53.

It belongs to the thioester dehydratase family. FabZ subfamily.

It is found in the cytoplasm. It catalyses the reaction a (3R)-hydroxyacyl-[ACP] = a (2E)-enoyl-[ACP] + H2O. Functionally, involved in unsaturated fatty acids biosynthesis. Catalyzes the dehydration of short chain beta-hydroxyacyl-ACPs and long chain saturated and unsaturated beta-hydroxyacyl-ACPs. The chain is 3-hydroxyacyl-[acyl-carrier-protein] dehydratase FabZ from Synechococcus sp. (strain WH7803).